Here is a 231-residue protein sequence, read N- to C-terminus: DNA repair protein RecO (231 aa).

It belongs to the RecO family.

Involved in DNA repair and RecF pathway recombination. The sequence is that of DNA repair protein RecO from Coxiella burnetii (strain CbuK_Q154) (Coxiella burnetii (strain Q154)).